The sequence spans 107 residues: Integration host factor subunit beta (107 aa).

Residues 87 to 107 (RERVNNGTRKNGGSADAASGG) form a disordered region.

Belongs to the bacterial histone-like protein family. In terms of assembly, heterodimer of an alpha and a beta chain.

In terms of biological role, this protein is one of the two subunits of integration host factor, a specific DNA-binding protein that functions in genetic recombination as well as in transcriptional and translational control. This is Integration host factor subunit beta from Granulibacter bethesdensis (strain ATCC BAA-1260 / CGDNIH1).